A 129-amino-acid polypeptide reads, in one-letter code: L-ectoine synthase (129 aa).

This sequence belongs to the ectoine synthase family.

The enzyme catalyses (2S)-4-acetamido-2-aminobutanoate = L-ectoine + H2O. The protein operates within amine and polyamine biosynthesis; ectoine biosynthesis; L-ectoine from L-aspartate 4-semialdehyde: step 3/3. Functionally, catalyzes the circularization of gamma-N-acetyl-alpha,gamma-diaminobutyric acid (ADABA) to ectoine (1,4,5,6-tetrahydro-2-methyl-4-pyrimidine carboxylic acid), which is an excellent osmoprotectant. The sequence is that of L-ectoine synthase from Halalkalibacterium halodurans (strain ATCC BAA-125 / DSM 18197 / FERM 7344 / JCM 9153 / C-125) (Bacillus halodurans).